A 121-amino-acid chain; its full sequence is Basic phospholipase A2 homolog AppP2 (121 aa).

Intrachain disulfides connect Cys26–Cys115, Cys28–Cys44, Cys43–Cys95, Cys49–Cys121, Cys50–Cys88, Cys57–Cys81, and Cys75–Cys86. The interval 105–117 (KKYKAYFKLKCKK) is important for membrane-damaging activities in eukaryotes and bacteria; heparin-binding.

It belongs to the phospholipase A2 family. Group II subfamily. K49 sub-subfamily. Monomer. Expressed by the venom gland.

The protein localises to the secreted. In terms of biological role, snake venom phospholipase A2 (PLA2) that lacks enzymatic activity. Displays edema-inducing activities. Is myotoxic. A model of myotoxic mechanism has been proposed: an apo Lys49-PLA2 is activated by the entrance of a hydrophobic molecule (e.g. fatty acid) at the hydrophobic channel of the protein leading to a reorientation of a monomer. This reorientation causes a transition between 'inactive' to 'active' states, causing alignment of C-terminal and membrane-docking sites (MDoS) side-by-side and putting the membrane-disruption sites (MDiS) in the same plane, exposed to solvent and in a symmetric position for both monomers. The MDoS region stabilizes the toxin on membrane by the interaction of charged residues with phospholipid head groups. Subsequently, the MDiS region destabilizes the membrane with penetration of hydrophobic residues. This insertion causes a disorganization of the membrane, allowing an uncontrolled influx of ions (i.e. calcium and sodium), and eventually triggering irreversible intracellular alterations and cell death. This is Basic phospholipase A2 homolog AppP2 from Agkistrodon piscivorus piscivorus (Eastern cottonmouth).